The following is a 164-amino-acid chain: CB1 cannabinoid receptor-interacting protein 1 (164 aa).

This sequence belongs to the CNRIP family. Interacts with the cannabinoid receptor CNR1 (via C-terminus). Does not interact with cannabinoid receptor CNR2.

Functionally, suppresses cannabinoid receptor CNR1-mediated tonic inhibition of voltage-gated calcium channels. In Rattus norvegicus (Rat), this protein is CB1 cannabinoid receptor-interacting protein 1 (Cnrip1).